The chain runs to 723 residues: Hypoxia-inducible factor prolyl hydroxylase (723 aa).

Residues cysteine 39, cysteine 42, cysteine 54, cysteine 57, cysteine 63, histidine 67, histidine 75, and cysteine 79 each coordinate Zn(2+). The segment at 39 to 79 (CTYCGSSCTSSQLQTCLFCGTVAYCSKEHQQLDWLTHKMIC) adopts an MYND-type; atypical zinc-finger fold. A compositionally biased stretch (low complexity) spans 249-270 (PSTASTATIPPPATTTSSATSS). Disordered regions lie at residues 249 to 275 (PSTA…KSET) and 294 to 323 (IETE…KINY). Residues 468 to 566 (GRSRAMLAIY…RFAITIWYMD (99 aa)) enclose the Fe2OG dioxygenase domain. Histidine 487, aspartate 489, and histidine 548 together coordinate Fe cation. Arginine 557 is a binding site for 2-oxoglutarate. Residues 678 to 723 (RTTSLQSISDHFRSERSHERRSSTSSDQDLDEGLPPPPSTNPEYYI) are disordered. A compositionally biased stretch (basic and acidic residues) spans 687–699 (DHFRSERSHERRS).

Interacts (via catalytic domain) with lin-10 (via N-terminus); the interaction regulates lin-10 subcellular localization; the interaction is direct. Interacts (via catalytic domain) with swan-1 (via WD 1-3 repeats); the interaction may regulate vhl-1-independent hif-1 transcriptional activity; the interaction is direct. Interacts (via C-terminus) with cysl-1; the interaction is enhanced by hydrogen disulfide and activates hif-1-mediated transcription; the interaction is direct. Requires Fe(2+) as cofactor. L-ascorbate is required as a cofactor. In larvae and adults, expressed in pharyngeal and body wall muscles.

It localises to the cytoplasm. Its subcellular location is the nucleus. The protein localises to the cell projection. It is found in the dendrite. The protein resides in the axon. The catalysed reaction is L-prolyl-[hypoxia-inducible factor alpha subunit] + 2-oxoglutarate + O2 = trans-4-hydroxy-L-prolyl-[hypoxia-inducible factor alpha subunit] + succinate + CO2. Inhibited by Co(2+) and dimethyloxalylglycine. Inhibited by the iron chelator 2, 2'-dipyridyl. Functionally, cellular oxygen sensor which regulates the stability and the activity of hypoxia-inducible transcription factor, hif-1. In normoxic conditions, hydroxylates hif-1 targeting it for vhl-1-mediated proteasomal degradation. In addition, regulates hif-1 transcriptional activity in a vhl-1-independent manner and independently of its hydroxylase activity. By regulating hif-1 activity, controls several cellular responses. Mediates susceptibility to B.thuringiensis and V.cholerae pore-forming toxins and enteropathogenic E.coli. Mediates susceptibility to P.aeruginosa PAO1-mediated killing by regulating resistance to cyanide produced by P.aeruginosa. Mediates resistance to S.aureus-mediated killing. In addition, plays a role in heat acclimation, neuronal development, behavioral responses to reoxygenation and hydrogen sulfide, iron homeostasis and aging. In neurons, involved in mitochondrion fusion during reoxygenation. Involved in egg laying. Its function is as follows. Regulates the trafficking of the glutamate receptor glr-1, probably independently of hif-1, by regulating lin-10 subcellular localization in response to oxygen levels. May hydroxylate lin-10. This Caenorhabditis elegans protein is Hypoxia-inducible factor prolyl hydroxylase.